Reading from the N-terminus, the 604-residue chain is MPDAHFDGKAFVLTLPAQPGVYRMLNAAGDVIYVGKAIDLRKRVSSYFQKSGLSPRIQLMVSQIAGIETTVTRSEAEALLLENNLIKSLAPRYNILFRDDKSYPYLLLTRHIFPRLAFYRGALDDRHQYFGPFPNAGVVKSSIQLLQKVFRLRTCENSVFDHRTRPCLLYQIKRCSGPCVGLITPEAYQQDVKSAAMFLQGKQDEVLKTIEQKMFTASDQQDYEQAAQLRDQMQALRKIQEKQFVDSGKALDADVIACAIEPDSHAVAVNLVMIRSGRHLGDKTFFPQNVYEADISTVLEAFVTQHYLNRSVPPLIILGQKIRVTLLQKLLSDQAGHKITLTTNPIGERRKWLDMAAENAQLALQQMLIQQASQEDRLQALQEALNLPGLARIECFDISHTMGEATIASCVVYDRFAMRNGEYRRYNITGIVPGDDYAAMRDVLQRRYAKLAMEEGKLPDLILIDGGKGQIRVASEVMIELGLNDIPLVGVAKGETRKPGLEQLILPWQEEALHLPDDHPALHLIQQIRDEAHRFAIQGHRAKRAKTRKISTLEQISGIGTKRRQSLLTRFGGLKGVKNASIEELQQTEGISRSLAEKIYRELR.

The 79-residue stretch at 17–95 (AQPGVYRMLN…IKSLAPRYNI (79 aa)) folds into the GIY-YIG domain. The 36-residue stretch at 204-239 (DEVLKTIEQKMFTASDQQDYEQAAQLRDQMQALRKI) folds into the UVR domain.

The protein belongs to the UvrC family. As to quaternary structure, interacts with UvrB in an incision complex.

It is found in the cytoplasm. The UvrABC repair system catalyzes the recognition and processing of DNA lesions. UvrC both incises the 5' and 3' sides of the lesion. The N-terminal half is responsible for the 3' incision and the C-terminal half is responsible for the 5' incision. The chain is UvrABC system protein C from Nitrosomonas europaea (strain ATCC 19718 / CIP 103999 / KCTC 2705 / NBRC 14298).